A 362-amino-acid chain; its full sequence is F-box protein At2g14710 (362 aa).

In terms of domain architecture, F-box spans 1–47 (MAHLKNLPWELIEEILSRVPPKSLVRFRTVSKQWNALFDDKTFINNH).

The sequence is that of F-box protein At2g14710 from Arabidopsis thaliana (Mouse-ear cress).